The sequence spans 78 residues: Small ribosomal subunit protein bS18 (78 aa).

Belongs to the bacterial ribosomal protein bS18 family. As to quaternary structure, part of the 30S ribosomal subunit. Forms a tight heterodimer with protein bS6.

In terms of biological role, binds as a heterodimer with protein bS6 to the central domain of the 16S rRNA, where it helps stabilize the platform of the 30S subunit. The polypeptide is Small ribosomal subunit protein bS18 (Lactobacillus acidophilus (strain ATCC 700396 / NCK56 / N2 / NCFM)).